We begin with the raw amino-acid sequence, 328 residues long: GTPase Obg (328 aa).

Residues 2–160 form the Obg domain; sequence YNFKDSVSIT…LNVRLELFLV (159 aa). The region spanning 161–326 is the OBG-type G domain; sequence ADIGLVGLPN…LIKEFFVLAK (166 aa). GTP contacts are provided by residues 167–174, 192–196, 213–216, 280–283, and 307–309; these read GLPNAGKS, FTTKI, DIPG, NKLD, and SIY. The Mg(2+) site is built by serine 174 and threonine 194.

This sequence belongs to the TRAFAC class OBG-HflX-like GTPase superfamily. OBG GTPase family. In terms of assembly, monomer. Mg(2+) is required as a cofactor.

The protein localises to the cytoplasm. Its function is as follows. An essential GTPase which binds GTP, GDP and possibly (p)ppGpp with moderate affinity, with high nucleotide exchange rates and a fairly low GTP hydrolysis rate. Plays a role in control of the cell cycle, stress response, ribosome biogenesis and in those bacteria that undergo differentiation, in morphogenesis control. The protein is GTPase Obg of Borreliella afzelii (strain PKo) (Borrelia afzelii).